A 70-amino-acid polypeptide reads, in one-letter code: Putative membrane protein insertion efficiency factor (70 aa).

It belongs to the UPF0161 family.

The protein localises to the cell inner membrane. Functionally, could be involved in insertion of integral membrane proteins into the membrane. The protein is Putative membrane protein insertion efficiency factor of Desulforapulum autotrophicum (strain ATCC 43914 / DSM 3382 / VKM B-1955 / HRM2) (Desulfobacterium autotrophicum).